A 125-amino-acid chain; its full sequence is uncharacterized protein (125 aa).

This is an uncharacterized protein from Caenorhabditis elegans.